A 136-amino-acid polypeptide reads, in one-letter code: uncharacterized protein (136 aa).

It is found in the mitochondrion. This is an uncharacterized protein from Marchantia polymorpha (Common liverwort).